A 435-amino-acid chain; its full sequence is Glutamate-1-semialdehyde 2,1-aminomutase (435 aa).

At K266 the chain carries N6-(pyridoxal phosphate)lysine.

This sequence belongs to the class-III pyridoxal-phosphate-dependent aminotransferase family. HemL subfamily. Homodimer. Requires pyridoxal 5'-phosphate as cofactor.

The protein localises to the cytoplasm. The enzyme catalyses (S)-4-amino-5-oxopentanoate = 5-aminolevulinate. It functions in the pathway porphyrin-containing compound metabolism; protoporphyrin-IX biosynthesis; 5-aminolevulinate from L-glutamyl-tRNA(Glu): step 2/2. This chain is Glutamate-1-semialdehyde 2,1-aminomutase, found in Coxiella burnetii (strain RSA 331 / Henzerling II).